Here is a 206-residue protein sequence, read N- to C-terminus: ATP-dependent Clp protease proteolytic subunit 2 (206 aa).

Catalysis depends on Ser100, which acts as the Nucleophile. His125 is a catalytic residue.

It belongs to the peptidase S14 family. Fourteen ClpP subunits assemble into 2 heptameric rings which stack back to back to give a disk-like structure with a central cavity, resembling the structure of eukaryotic proteasomes.

The protein localises to the cytoplasm. The enzyme catalyses Hydrolysis of proteins to small peptides in the presence of ATP and magnesium. alpha-casein is the usual test substrate. In the absence of ATP, only oligopeptides shorter than five residues are hydrolyzed (such as succinyl-Leu-Tyr-|-NHMec, and Leu-Tyr-Leu-|-Tyr-Trp, in which cleavage of the -Tyr-|-Leu- and -Tyr-|-Trp bonds also occurs).. Functionally, cleaves peptides in various proteins in a process that requires ATP hydrolysis. Has a chymotrypsin-like activity. Plays a major role in the degradation of misfolded proteins. This is ATP-dependent Clp protease proteolytic subunit 2 from Myxococcus xanthus.